The sequence spans 692 residues: E3 ubiquitin-protein ligase brl1 (692 aa).

Residues 302–370 (SNEEKIESIN…RNERDSLVAK (69 aa)) adopt a coiled-coil conformation. The RING-type zinc-finger motif lies at 639–679 (CSVCNFSNWKSKLIPNCGHAFCSNCMEPFYEHKTSTCPQCE).

Belongs to the BRE1 family. Component of the histone H2B ubiquitin ligase complex (HULC) composed of at least brl1, brl2, rhp6 and shf1.

The protein localises to the nucleus. The enzyme catalyses S-ubiquitinyl-[E2 ubiquitin-conjugating enzyme]-L-cysteine + [acceptor protein]-L-lysine = [E2 ubiquitin-conjugating enzyme]-L-cysteine + N(6)-ubiquitinyl-[acceptor protein]-L-lysine.. It functions in the pathway protein modification; protein ubiquitination. Functionally, E3 ubiquitin-protein ligase which belongs to the histone H2B ubiquitin ligase complex (HULC) which mediates monoubiquitination of histone H2B to form H2BK123ub1. H2BK123ub1 gives a specific tag for epigenetic transcriptional activation and is also a prerequisite for H3K4me and H3K79me formation. This Schizosaccharomyces pombe (strain 972 / ATCC 24843) (Fission yeast) protein is E3 ubiquitin-protein ligase brl1 (brl1).